The following is a 100-amino-acid chain: Movement protein TGBp3 (100 aa).

The Lumenal segment spans residues 1-41 (MQTAPREYSTSGPTAVLAPTTNTQHYAPYSLYRFLSSHKLD). Residues 42–59 (LLLGIALLVFLYVITAAP) form a helical membrane-spanning segment. Residues 60–100 (KEVCQVVITGESVVIRNCQQPDRILANLNLSPWNGVKFPLL) lie on the Cytoplasmic side of the membrane.

The protein belongs to the Tymovirales TGBp3 protein family.

The protein resides in the host endoplasmic reticulum membrane. Functionally, plays a role in viral cell-to-cell propagation, by facilitating genome transport to neighboring plant cells through plasmosdesmata. May induce the formation of granular vesicles derived from the Endoplasmic reticulum, which align on actin filaments. The sequence is that of Movement protein TGBp3 from Narcissus mosaic virus (NMV).